The chain runs to 106 residues: L-rhamnose mutarotase (106 aa).

Tyr-20 contributes to the substrate binding site. His-24 acts as the Proton donor in catalysis. Substrate contacts are provided by residues Tyr-43 and 78-79; that span reads WW.

This sequence belongs to the rhamnose mutarotase family. As to quaternary structure, homodimer.

Its subcellular location is the cytoplasm. It carries out the reaction alpha-L-rhamnose = beta-L-rhamnose. Its pathway is carbohydrate metabolism; L-rhamnose metabolism. Its function is as follows. Involved in the anomeric conversion of L-rhamnose. This is L-rhamnose mutarotase from Brucella anthropi (strain ATCC 49188 / DSM 6882 / CCUG 24695 / JCM 21032 / LMG 3331 / NBRC 15819 / NCTC 12168 / Alc 37) (Ochrobactrum anthropi).